The chain runs to 692 residues: Furin-like protease kpc-1 (692 aa).

The N-terminal stretch at 1 to 33 is a signal peptide; that stretch reads MSNISWYRHCSVRLQLVTLALFLLLGSASLGSA. An N-linked (GlcNAc...) asparagine glycan is attached at N3. Positions 34–139 are excised as a propeptide; that stretch reads HIDEEFEDDV…QQVAKRRVKR (106 aa). Residues 140–670 are Lumenal-facing; it reads GYRRIRRHTD…RSVQMEATSS (531 aa). The interval 152–177 is disordered; sequence DIFEEDDDGTQISKSRNRKHPDPNDP. D176 is a Ca(2+) binding site. The Peptidase S8 domain maps to 182-503; the sequence is MWYLNRGEHH…YGLMDAGAMV (322 aa). The active-site Charge relay system is D221. Substrate is bound at residue D222. D230, D242, D247, and D249 together coordinate Ca(2+). Residues 230–249 are disordered; it reads DISPNYDERASYDVNDRDND. 259-260 provides a ligand contact to substrate; it reads EN. Residue H262 is the Charge relay system of the active site. I273 contributes to the Ca(2+) binding site. The N-linked (GlcNAc...) asparagine glycan is linked to N275. Residues N276, L278, and I280 each contribute to the Ca(2+) site. Disulfide bonds link C279–C428 and C371–C401. Residues E304, 321–326, D332, and 360–363 contribute to the substrate site; these read SWGPDD and ASGN. Position 326 (D326) interacts with Ca(2+). Position 369 (D369) interacts with Ca(2+). Positions 374 and 376 each coordinate substrate. Position 399 (E399) interacts with Ca(2+). S436 serves as the catalytic Charge relay system. A substrate-binding site is contributed by S436. N-linked (GlcNAc...) asparagine glycosylation is found at N455 and N487. Positions 512 to 646 constitute a P/Homo B domain; it reads VDEQHRCRQF…ELVLYGTDRE (135 aa). A disulfide bridge links C518 with C544. The Cell attachment site motif lies at 570-572; that stretch reads RGD. Residues 671–692 form a helical membrane-spanning segment; sequence GTQYSIFHVITLVILTFSQILY.

It belongs to the peptidase S8 family. Furin subfamily. In terms of assembly, interacts (via extracellular domain) with receptor dma-1 (via extracellular domain); the interaction promotes dma-1 internalization. Ca(2+) serves as cofactor. In terms of tissue distribution, expressed in the nervous system including the ventral nerve cord, the nerve ring and the retrovesicular ganglion, and in epithelial cells. Expressed in IL2 neurons. Expressed in PVD mechanosensory neurons. Expressed in pharynx with strong expression in the g2 pharyngeal gland cells and vpi pharyngeal intestinal valve cells. Expressed in intestine.

The protein localises to the cell membrane. The protein resides in the perikaryon. It is found in the cell projection. It localises to the axon. Furin-like protease which cleaves proproteins at the RX(K/R)R consensus motif. During neuronal development, regulates the formation and extension of dendrite branches and cellular positioning of various type of neurons. Together with chin-1 and cdc-42, plays a role in the development of the neuropil and is required for the guidance of axons from neurons, including SubL pioneer neurons and AIY interneurons, into the nerve ring. Its role in axon guidance in glia and pioneer neurons may be through ensuring the fmi-1 protein is correctly localized to the nerve ring. Promotes the formation, extension and self-avoidance of dendritic branches of PVD and FLP mechanosensory neurons. In PVD neurons, regulates plasma membrane levels of branching receptor dma-1 by targeting it to late endosomes and thus promotes normal dendrite branching and dendrite self-avoidance. Also controls dendrite extension in AIY and D-type motoneurons, dendrite branching in AQR sensory neurons and VC4/5 motoneurons, the normal number of dendritic branches in AVL neurons and the positioning of HSN and ALM/PLM neurons. Dispensable for maintaining dendrite branching in adults. Also regulates dauer-specific dendritic branching of IL2 neurons and dauer-specific nictation behavior. Under adverse environmental conditions, may promote dauer formation by processing insulin-like proteins ins-1 and ins-18, two daf-2/InsR antagonists. The polypeptide is Furin-like protease kpc-1 (Caenorhabditis elegans).